Reading from the N-terminus, the 258-residue chain is Acyl-[acyl-carrier-protein]--UDP-N-acetylglucosamine O-acyltransferase (258 aa).

The protein belongs to the transferase hexapeptide repeat family. LpxA subfamily. As to quaternary structure, homotrimer.

It is found in the cytoplasm. The catalysed reaction is a (3R)-hydroxyacyl-[ACP] + UDP-N-acetyl-alpha-D-glucosamine = a UDP-3-O-[(3R)-3-hydroxyacyl]-N-acetyl-alpha-D-glucosamine + holo-[ACP]. It functions in the pathway glycolipid biosynthesis; lipid IV(A) biosynthesis; lipid IV(A) from (3R)-3-hydroxytetradecanoyl-[acyl-carrier-protein] and UDP-N-acetyl-alpha-D-glucosamine: step 1/6. Its function is as follows. Involved in the biosynthesis of lipid A, a phosphorylated glycolipid that anchors the lipopolysaccharide to the outer membrane of the cell. The protein is Acyl-[acyl-carrier-protein]--UDP-N-acetylglucosamine O-acyltransferase of Ectopseudomonas mendocina (strain ymp) (Pseudomonas mendocina).